The primary structure comprises 241 residues: Isoprenyl transferase (241 aa).

The active site involves Asp-17. Position 17 (Asp-17) interacts with Mg(2+). Substrate-binding positions include 18–21, Trp-22, Arg-30, His-34, and 62–64; these read GNGR and STE. Asn-65 functions as the Proton acceptor in the catalytic mechanism. Substrate-binding positions include Trp-66, Arg-68, Arg-186, and 192-194; that span reads RLS. Glu-205 serves as a coordination point for Mg(2+).

The protein belongs to the UPP synthase family. Homodimer. Mg(2+) serves as cofactor.

Functionally, catalyzes the condensation of isopentenyl diphosphate (IPP) with allylic pyrophosphates generating different type of terpenoids. The chain is Isoprenyl transferase from Leptospira interrogans serogroup Icterohaemorrhagiae serovar copenhageni (strain Fiocruz L1-130).